Consider the following 742-residue polypeptide: 5-methyltetrahydropteroyltriglutamate--homocysteine methyltransferase (742 aa).

Residues 18–21 and lysine 112 contribute to the 5-methyltetrahydropteroyltri-L-glutamate site; that span reads REWK. L-homocysteine contacts are provided by residues 420–422 and glutamate 473; that span reads IGS. L-methionine contacts are provided by residues 420 to 422 and glutamate 473; that span reads IGS. Position 550 (tryptophan 550) interacts with 5-methyltetrahydropteroyltri-L-glutamate. L-homocysteine is bound at residue aspartate 588. Position 588 (aspartate 588) interacts with L-methionine. Glutamate 594 contributes to the 5-methyltetrahydropteroyltri-L-glutamate binding site. Residues histidine 630, cysteine 632, and glutamate 654 each contribute to the Zn(2+) site. Histidine 683 acts as the Proton donor in catalysis. Cysteine 715 provides a ligand contact to Zn(2+).

Belongs to the vitamin-B12 independent methionine synthase family. It depends on Zn(2+) as a cofactor.

It carries out the reaction 5-methyltetrahydropteroyltri-L-glutamate + L-homocysteine = tetrahydropteroyltri-L-glutamate + L-methionine. It participates in amino-acid biosynthesis; L-methionine biosynthesis via de novo pathway; L-methionine from L-homocysteine (MetE route): step 1/1. Functionally, catalyzes the transfer of a methyl group from 5-methyltetrahydrofolate to homocysteine resulting in methionine formation. This is 5-methyltetrahydropteroyltriglutamate--homocysteine methyltransferase from Staphylococcus aureus (strain bovine RF122 / ET3-1).